Reading from the N-terminus, the 127-residue chain is Riboflavin kinase (127 aa).

CDP is bound at residue Gly10–Lys15. Mg(2+) is bound by residues Thr39 and Asn41. FMN is bound by residues Thr96 and Glu104. Ile109–Arg112 contacts CDP.

It belongs to the archaeal riboflavin kinase family. It depends on Mg(2+) as a cofactor.

It carries out the reaction riboflavin + CTP = CDP + FMN + H(+). It functions in the pathway cofactor biosynthesis; FMN biosynthesis; FMN from riboflavin (CTP route): step 1/1. In terms of biological role, catalyzes the CTP-dependent phosphorylation of riboflavin (vitamin B2) to form flavin mononucleotide (FMN). The sequence is that of Riboflavin kinase from Methanococcus maripaludis (strain DSM 14266 / JCM 13030 / NBRC 101832 / S2 / LL).